The chain runs to 513 residues: ATP synthase subunit alpha (513 aa).

Position 169-176 (169-176 (GDRQTGKT)) interacts with ATP.

The protein belongs to the ATPase alpha/beta chains family. In terms of assembly, F-type ATPases have 2 components, CF(1) - the catalytic core - and CF(0) - the membrane proton channel. CF(1) has five subunits: alpha(3), beta(3), gamma(1), delta(1), epsilon(1). CF(0) has three main subunits: a(1), b(2) and c(9-12). The alpha and beta chains form an alternating ring which encloses part of the gamma chain. CF(1) is attached to CF(0) by a central stalk formed by the gamma and epsilon chains, while a peripheral stalk is formed by the delta and b chains.

It is found in the cell inner membrane. It carries out the reaction ATP + H2O + 4 H(+)(in) = ADP + phosphate + 5 H(+)(out). In terms of biological role, produces ATP from ADP in the presence of a proton gradient across the membrane. The alpha chain is a regulatory subunit. This is ATP synthase subunit alpha from Bordetella pertussis (strain Tohama I / ATCC BAA-589 / NCTC 13251).